The chain runs to 260 residues: Ribonuclease PH (260 aa).

Phosphate contacts are provided by residues Arg-88 and 126–128 (GTR).

The protein belongs to the RNase PH family. In terms of assembly, homohexameric ring arranged as a trimer of dimers.

The enzyme catalyses tRNA(n+1) + phosphate = tRNA(n) + a ribonucleoside 5'-diphosphate. Its function is as follows. Phosphorolytic 3'-5' exoribonuclease that plays an important role in tRNA 3'-end maturation. Removes nucleotide residues following the 3'-CCA terminus of tRNAs; can also add nucleotides to the ends of RNA molecules by using nucleoside diphosphates as substrates, but this may not be physiologically important. Probably plays a role in initiation of 16S rRNA degradation (leading to ribosome degradation) during starvation. This Mycobacterium sp. (strain JLS) protein is Ribonuclease PH.